A 170-amino-acid chain; its full sequence is Urease accessory protein UreE (170 aa).

This sequence belongs to the UreE family.

It localises to the cytoplasm. Functionally, involved in urease metallocenter assembly. Binds nickel. Probably functions as a nickel donor during metallocenter assembly. The polypeptide is Urease accessory protein UreE (Helicobacter acinonychis (strain Sheeba)).